We begin with the raw amino-acid sequence, 635 residues long: MGNGNSTETKESRRSKMRKKIQNFRSRRRLSRPGSGSVSGLASQRSVSADDFAGIALLTLIGAEMKFKDKWLACVSFGEQTFRSEISDSTEKPIWNSEKKLLLEKNGPSLARISVFETNRLLKNNIVGYCELDLLDFVVQEPDSTCKSFDLLDPASSNVVGSMFVSCSVEDPVETETCFAKRILSIVDYDEDGKLSFSEFSDLMNAFGNVVAANKKEELFKAADLNGDGVVTIDELAALLAVQQEQEPIINSCPVCGEALQLDKLNAMIHMTLCFDEGTGNQMTGGFLTDRQASYGWMFKLSEWTHLSTYDVGLNTGSSASHIVVIDRKTKRLVEELIDSKIVMSMRAIYQSKIGLRLMDQGAKEILQNLSEKQGKKMNSVESAQNIPSFLEFFKDQINMAEVKYPLDHFKTFNEFFVRELKPGARPIACMDQDDVAVSAADCRLMAFQSVDDSTRFWIKGRKFSIKGLLGNDVQSDAFLDGSLVIFRLAPQDYHRFHSPVSGVIEKFVNVSGSLYTVNPIAVNSKYCNVFTENKRTIVIISTAEFGKVAFVAIGATMVGSISFVRQEGDHVKKGDELGYFSFGGSTVICVFEKDSIKIDEDLLANSARSLETLVTVGMQLGVSFPKLENCVLEP.

A disordered region spans residues 1–42 (MGNGNSTETKESRRSKMRKKIQNFRSRRRLSRPGSGSVSGLA). Residue G2 is the site of N-myristoyl glycine attachment. Residues 15 to 31 (SKMRKKIQNFRSRRRLS) show a composition bias toward basic residues. The region spanning 22–147 (QNFRSRRRLS…VVQEPDSTCK (126 aa)) is the C2 domain. 2 EF-hand domains span residues 180–210 (AKRILSIVDYDEDGKLSFSEFSDLMNAFGNV) and 211–246 (VAANKKEELFKAADLNGDGVVTIDELAALLAVQQEQ). 9 residues coordinate Ca(2+): D188, D190, D192, K194, E199, D224, N226, D228, and E235. Active-site charge relay system; for autoendoproteolytic cleavage activity residues include D442, H498, and S586. The active-site Schiff-base intermediate with substrate; via pyruvic acid; for decarboxylase activity is S586. S586 bears the Pyruvic acid (Ser); by autocatalysis mark.

This sequence belongs to the phosphatidylserine decarboxylase family. PSD-B subfamily. Eukaryotic type II sub-subfamily. In terms of assembly, heterodimer of a large membrane-associated beta subunit and a small pyruvoyl-containing alpha subunit. The cofactor is pyruvate. Is synthesized initially as an inactive proenzyme. Formation of the active enzyme involves a self-maturation process in which the active site pyruvoyl group is generated from an internal serine residue via an autocatalytic post-translational modification. Two non-identical subunits are generated from the proenzyme in this reaction, and the pyruvate is formed at the N-terminus of the alpha chain, which is derived from the carboxyl end of the proenzyme. The autoendoproteolytic cleavage occurs by a canonical serine protease mechanism, in which the side chain hydroxyl group of the serine supplies its oxygen atom to form the C-terminus of the beta chain, while the remainder of the serine residue undergoes an oxidative deamination to produce ammonia and the pyruvoyl prosthetic group on the alpha chain. During this reaction, the Ser that is part of the protease active site of the proenzyme becomes the pyruvoyl prosthetic group, which constitutes an essential element of the active site of the mature decarboxylase. As to expression, expressed in roots, leaves, stems and flowers.

The protein localises to the endoplasmic reticulum membrane. The catalysed reaction is a 1,2-diacyl-sn-glycero-3-phospho-L-serine + H(+) = a 1,2-diacyl-sn-glycero-3-phosphoethanolamine + CO2. It participates in phospholipid metabolism; phosphatidylethanolamine biosynthesis; phosphatidylethanolamine from CDP-diacylglycerol: step 2/2. Functionally, catalyzes the formation of phosphatidylethanolamine (PtdEtn) from phosphatidylserine (PtdSer). Plays a central role in phospholipid metabolism and in the interorganelle trafficking of phosphatidylserine. Contributes only to a minor proportion of PtdEtn production. This chain is Phosphatidylserine decarboxylase proenzyme 3 (PSD3), found in Arabidopsis thaliana (Mouse-ear cress).